The sequence spans 219 residues: Uracil-DNA glycosylase (219 aa).

Asp61 (proton acceptor) is an active-site residue.

Belongs to the uracil-DNA glycosylase (UDG) superfamily. UNG family.

It localises to the cytoplasm. The enzyme catalyses Hydrolyzes single-stranded DNA or mismatched double-stranded DNA and polynucleotides, releasing free uracil.. Functionally, excises uracil residues from the DNA which can arise as a result of misincorporation of dUMP residues by DNA polymerase or due to deamination of cytosine. The protein is Uracil-DNA glycosylase of Neisseria gonorrhoeae (strain ATCC 700825 / FA 1090).